The primary structure comprises 115 residues: T cell receptor beta variable 7-8 (115 aa).

A signal peptide spans 1-21 (MGTRLLCWVVLGFLGTDHTGA). The region spanning 22–115 (GVSQSPRYKV…SAVYLCASSL (94 aa)) is the Ig-like domain. Cysteine 42 and cysteine 111 are disulfide-bonded.

Alpha-beta TR is a heterodimer composed of an alpha and beta chain; disulfide-linked. The alpha-beta TR is associated with the transmembrane signaling CD3 coreceptor proteins to form the TR-CD3 (TcR or TCR). The assembly of alpha-beta TR heterodimers with CD3 occurs in the endoplasmic reticulum where a single alpha-beta TR heterodimer associates with one CD3D-CD3E heterodimer, one CD3G-CD3E heterodimer and one CD247 homodimer forming a stable octameric structure. CD3D-CD3E and CD3G-CD3E heterodimers preferentially associate with TR alpha and TR beta chains, respectively. The association of the CD247 homodimer is the last step of TcR assembly in the endoplasmic reticulum and is required for transport to the cell surface.

The protein resides in the cell membrane. In terms of biological role, v region of the variable domain of T cell receptor (TR) beta chain that participates in the antigen recognition. Alpha-beta T cell receptors are antigen specific receptors which are essential to the immune response and are present on the cell surface of T lymphocytes. Recognize peptide-major histocompatibility (MH) (pMH) complexes that are displayed by antigen presenting cells (APC), a prerequisite for efficient T cell adaptive immunity against pathogens. Binding of alpha-beta TR to pMH complex initiates TR-CD3 clustering on the cell surface and intracellular activation of LCK that phosphorylates the ITAM motifs of CD3G, CD3D, CD3E and CD247 enabling the recruitment of ZAP70. In turn ZAP70 phosphorylates LAT, which recruits numerous signaling molecules to form the LAT signalosome. The LAT signalosome propagates signal branching to three major signaling pathways, the calcium, the mitogen-activated protein kinase (MAPK) kinase and the nuclear factor NF-kappa-B (NF-kB) pathways, leading to the mobilization of transcription factors that are critical for gene expression and essential for T cell growth and differentiation. The T cell repertoire is generated in the thymus, by V-(D)-J rearrangement. This repertoire is then shaped by intrathymic selection events to generate a peripheral T cell pool of self-MH restricted, non-autoaggressive T cells. Post-thymic interaction of alpha-beta TR with the pMH complexes shapes TR structural and functional avidity. The chain is T cell receptor beta variable 7-8 from Homo sapiens (Human).